The following is a 64-amino-acid chain: Large ribosomal subunit protein uL29 (64 aa).

The protein belongs to the universal ribosomal protein uL29 family.

The chain is Large ribosomal subunit protein uL29 (rpl29) from Methanothermobacter thermautotrophicus (strain ATCC 29096 / DSM 1053 / JCM 10044 / NBRC 100330 / Delta H) (Methanobacterium thermoautotrophicum).